The sequence spans 203 residues: Holliday junction branch migration complex subunit RuvA (203 aa).

A domain I region spans residues 1 to 64; the sequence is MIGRLRGIII…EDAQLLYGFN (64 aa). The interval 65-142 is domain II; the sequence is NKQERTLFKE…KGLHGDLFTP (78 aa). The flexible linker stretch occupies residues 143–154; that stretch reads AADLVLTSPASP. The tract at residues 155 to 203 is domain III; the sequence is ATNDAEQEAVAALVALGYKPQEASRMVSKIARPDASSETLIREALRAAL.

The protein belongs to the RuvA family. As to quaternary structure, homotetramer. Forms an RuvA(8)-RuvB(12)-Holliday junction (HJ) complex. HJ DNA is sandwiched between 2 RuvA tetramers; dsDNA enters through RuvA and exits via RuvB. An RuvB hexamer assembles on each DNA strand where it exits the tetramer. Each RuvB hexamer is contacted by two RuvA subunits (via domain III) on 2 adjacent RuvB subunits; this complex drives branch migration. In the full resolvosome a probable DNA-RuvA(4)-RuvB(12)-RuvC(2) complex forms which resolves the HJ.

The protein localises to the cytoplasm. Functionally, the RuvA-RuvB-RuvC complex processes Holliday junction (HJ) DNA during genetic recombination and DNA repair, while the RuvA-RuvB complex plays an important role in the rescue of blocked DNA replication forks via replication fork reversal (RFR). RuvA specifically binds to HJ cruciform DNA, conferring on it an open structure. The RuvB hexamer acts as an ATP-dependent pump, pulling dsDNA into and through the RuvAB complex. HJ branch migration allows RuvC to scan DNA until it finds its consensus sequence, where it cleaves and resolves the cruciform DNA. This Escherichia coli O9:H4 (strain HS) protein is Holliday junction branch migration complex subunit RuvA.